Consider the following 352-residue polypeptide: N-acetyl-gamma-glutamyl-phosphate reductase (352 aa).

Cysteine 149 is an active-site residue.

It belongs to the NAGSA dehydrogenase family. Type 1 subfamily.

The protein resides in the cytoplasm. It catalyses the reaction N-acetyl-L-glutamate 5-semialdehyde + phosphate + NADP(+) = N-acetyl-L-glutamyl 5-phosphate + NADPH + H(+). The protein operates within amino-acid biosynthesis; L-arginine biosynthesis; N(2)-acetyl-L-ornithine from L-glutamate: step 3/4. In terms of biological role, catalyzes the NADPH-dependent reduction of N-acetyl-5-glutamyl phosphate to yield N-acetyl-L-glutamate 5-semialdehyde. The polypeptide is N-acetyl-gamma-glutamyl-phosphate reductase (Polynucleobacter asymbioticus (strain DSM 18221 / CIP 109841 / QLW-P1DMWA-1) (Polynucleobacter necessarius subsp. asymbioticus)).